Reading from the N-terminus, the 140-residue chain is FK506-binding protein 2 (140 aa).

Residues 1 to 19 (MKFTTGLSVLLFFVLQVFA) form the signal peptide. Positions 43-132 (GDVVSVHYTG…IFETELVDIQ (90 aa)) constitute a PPIase FKBP-type domain.

It belongs to the FKBP-type PPIase family. FKBP2 subfamily.

It localises to the endoplasmic reticulum. It catalyses the reaction [protein]-peptidylproline (omega=180) = [protein]-peptidylproline (omega=0). Inhibited by both FK506 and rapamycin. Functionally, PPIases accelerate the folding of proteins. It catalyzes the cis-trans isomerization of proline imidic peptide bonds in oligopeptides. The sequence is that of FK506-binding protein 2 (FPR2) from Kluyveromyces lactis (strain ATCC 8585 / CBS 2359 / DSM 70799 / NBRC 1267 / NRRL Y-1140 / WM37) (Yeast).